The sequence spans 245 residues: Exosome complex component RRP41 (245 aa).

An N-acetylalanine modification is found at A2.

This sequence belongs to the RNase PH family. In terms of assembly, component of the RNA exosome core complex (Exo-9), composed of EXOSC1, EXOSC2, EXOSC3, EXOSC4, EXOSC5, EXOSC6, EXOSC7, EXOSC8 and EXOSC9; within the complex interacts with EXOSC2, EXOSC7 and EXOSC9. The catalytically inactive RNA exosome core complex (Exo-9) associates with the catalytic subunit EXOSC10/RRP6. Exo-9 may associate with DIS3 to form the nucleolar exosome complex, or DIS3L to form the cytoplasmic exosome complex. Exo-9 is formed by a hexameric base ring consisting of the heterodimers EXOSC4-EXOSC9, EXOSC5-EXOSC8 and EXOSC6-EXOSC7, and a cap ring consisting of EXOSC1, EXOSC2 and EXOSC3. The RNA exosome complex associates with cofactors C1D/RRP47, MPHOSPH6/MPP6 and MTREX/MTR4. Interacts with DDX60. Interacts with DIS3; the interaction is direct.

Its subcellular location is the cytoplasm. The protein localises to the nucleus. The protein resides in the nucleolus. It localises to the nucleoplasm. Functionally, non-catalytic component of the RNA exosome complex which has 3'-&gt;5' exoribonuclease activity and participates in a multitude of cellular RNA processing and degradation events. In the nucleus, the RNA exosome complex is involved in proper maturation of stable RNA species such as rRNA, snRNA and snoRNA, in the elimination of RNA processing by-products and non-coding 'pervasive' transcripts, such as antisense RNA species and promoter-upstream transcripts (PROMPTs), and of mRNAs with processing defects, thereby limiting or excluding their export to the cytoplasm. The RNA exosome may be involved in Ig class switch recombination (CSR) and/or Ig variable region somatic hypermutation (SHM) by targeting AICDA deamination activity to transcribed dsDNA substrates. In the cytoplasm, the RNA exosome complex is involved in general mRNA turnover and specifically degrades inherently unstable mRNAs containing AU-rich elements (AREs) within their 3' untranslated regions, and in RNA surveillance pathways, preventing translation of aberrant mRNAs. It seems to be involved in degradation of histone mRNA. The catalytic inactive RNA exosome core complex of 9 subunits (Exo-9) is proposed to play a pivotal role in the binding and presentation of RNA for ribonucleolysis, and to serve as a scaffold for the association with catalytic subunits and accessory proteins or complexes. EXOSC4 binds to ARE-containing RNAs. The chain is Exosome complex component RRP41 (Exosc4) from Mus musculus (Mouse).